We begin with the raw amino-acid sequence, 360 residues long: NAD(P)H-quinone oxidoreductase subunit 1, chloroplastic (360 aa).

Helical transmembrane passes span 27 to 47 (VWIFVPIFSLVLGIITGVLVI), 98 to 118 (FSIGPSIAVISILLSYSVIPF), 129 to 149 (IGIFLWIAISSIAPIGLLMSG), 165 to 185 (AAQSISYEIPLTLCVLSISLL), 203 to 223 (FWGWNLWRQPIGFIIFLISSL), 253 to 273 (FGLFYVASYLNLLISALFVTI), 297 to 317 (VFGTTIGIFITLAKTYLVLVI), and 340 to 360 (FLLPISLGNLLLTTSFQLLSL).

This sequence belongs to the complex I subunit 1 family. In terms of assembly, NDH is composed of at least 16 different subunits, 5 of which are encoded in the nucleus.

The protein localises to the plastid. It is found in the chloroplast thylakoid membrane. The enzyme catalyses a plastoquinone + NADH + (n+1) H(+)(in) = a plastoquinol + NAD(+) + n H(+)(out). The catalysed reaction is a plastoquinone + NADPH + (n+1) H(+)(in) = a plastoquinol + NADP(+) + n H(+)(out). In terms of biological role, NDH shuttles electrons from NAD(P)H:plastoquinone, via FMN and iron-sulfur (Fe-S) centers, to quinones in the photosynthetic chain and possibly in a chloroplast respiratory chain. The immediate electron acceptor for the enzyme in this species is believed to be plastoquinone. Couples the redox reaction to proton translocation, and thus conserves the redox energy in a proton gradient. This is NAD(P)H-quinone oxidoreductase subunit 1, chloroplastic from Draba nemorosa (Woodland whitlowgrass).